A 362-amino-acid polypeptide reads, in one-letter code: Peptide chain release factor 1 (362 aa).

The residue at position 237 (glutamine 237) is an N5-methylglutamine.

This sequence belongs to the prokaryotic/mitochondrial release factor family. In terms of processing, methylated by PrmC. Methylation increases the termination efficiency of RF1.

The protein resides in the cytoplasm. Its function is as follows. Peptide chain release factor 1 directs the termination of translation in response to the peptide chain termination codons UAG and UAA. The sequence is that of Peptide chain release factor 1 from Vibrio campbellii (strain ATCC BAA-1116).